The following is a 592-amino-acid chain: Potassium-transporting ATPase potassium-binding subunit (592 aa).

The next 13 membrane-spanning stretches (helical) occupy residues 6–26 (WLET…FGTY), 67–87 (ACAM…MLLL), 136–156 (GFAV…IAAI), 179–199 (LYIL…QGVI), 283–303 (LSNI…TYTF), 312–332 (QGWA…GVFY), 359–379 (FGLA…CGAV), 389–409 (IGGM…GGVG), 411–431 (GLYT…LMIG), 450–470 (ITTV…AMIL), 489–511 (LYAF…GNTL), 519–539 (VAML…AGGL), and 559–579 (FALW…FPAL).

Belongs to the KdpA family. The system is composed of three essential subunits: KdpA, KdpB and KdpC.

It localises to the cell inner membrane. Functionally, part of the high-affinity ATP-driven potassium transport (or Kdp) system, which catalyzes the hydrolysis of ATP coupled with the electrogenic transport of potassium into the cytoplasm. This subunit binds the periplasmic potassium ions and delivers the ions to the membrane domain of KdpB through an intramembrane tunnel. This chain is Potassium-transporting ATPase potassium-binding subunit, found in Geotalea uraniireducens (strain Rf4) (Geobacter uraniireducens).